Here is a 760-residue protein sequence, read N- to C-terminus: Xaa-Pro dipeptidyl-peptidase (760 aa).

Residues S349, D469, and H499 each act as charge relay system in the active site.

Belongs to the peptidase S15 family. As to quaternary structure, homodimer.

It is found in the cytoplasm. It carries out the reaction Hydrolyzes Xaa-Pro-|- bonds to release unblocked, N-terminal dipeptides from substrates including Ala-Pro-|-p-nitroanilide and (sequentially) Tyr-Pro-|-Phe-Pro-|-Gly-Pro-|-Ile.. Its function is as follows. Removes N-terminal dipeptides sequentially from polypeptides having unsubstituted N-termini provided that the penultimate residue is proline. The chain is Xaa-Pro dipeptidyl-peptidase from Streptococcus pyogenes serotype M12 (strain MGAS9429).